The following is a 309-amino-acid chain: Homoserine O-succinyltransferase (309 aa).

Catalysis depends on C142, which acts as the Acyl-thioester intermediate. The substrate site is built by K163 and S192. H235 serves as the catalytic Proton acceptor. E237 is an active-site residue. Residue R249 coordinates substrate.

This sequence belongs to the MetA family. Homodimer.

Its subcellular location is the cytoplasm. It catalyses the reaction L-homoserine + succinyl-CoA = O-succinyl-L-homoserine + CoA. It participates in amino-acid biosynthesis; L-methionine biosynthesis via de novo pathway; O-succinyl-L-homoserine from L-homoserine: step 1/1. Transfers a succinyl group from succinyl-CoA to L-homoserine, forming succinyl-L-homoserine. This chain is Homoserine O-succinyltransferase, found in Shigella sonnei (strain Ss046).